Consider the following 61-residue polypeptide: MDPNCSCEAGGSCACAGSCKCKKCKCTSCKKSCCSCCPLGCAKCAQGCICKGASEKCSCCA.

M1 is subject to N-acetylmethionine. The interval 1 to 29 (MDPNCSCEAGGSCACAGSCKCKKCKCTSC) is beta. Positions 5, 7, 13, 15, 19, 21, 24, 26, 29, 33, 34, 36, 37, 41, 44, 48, 50, and 57 each coordinate a divalent metal cation. Residues 30–61 (KKSCCSCCPLGCAKCAQGCICKGASEKCSCCA) form an alpha region. A Phosphoserine modification is found at S58. The a divalent metal cation site is built by C59 and C60.

It belongs to the metallothionein superfamily. Type 1 family. As to quaternary structure, monomer.

Its function is as follows. Metallothioneins have a high content of cysteine residues that bind various heavy metals; these proteins are transcriptionally regulated by both heavy metals and glucocorticoids. The protein is Metallothionein-1H (MT1H) of Homo sapiens (Human).